Here is a 206-residue protein sequence, read N- to C-terminus: 2,3-bisphosphoglycerate-dependent phosphoglycerate mutase (206 aa).

Substrate contacts are provided by residues 9–16 (RHGQSEWN), 22–23 (TG), R61, 88–91 (ERDY), K99, 115–116 (RR), and 159–160 (GN). Catalysis depends on H10, which acts as the Tele-phosphohistidine intermediate. E88 (proton donor/acceptor) is an active-site residue.

This sequence belongs to the phosphoglycerate mutase family. BPG-dependent PGAM subfamily. In terms of assembly, homodimer.

It carries out the reaction (2R)-2-phosphoglycerate = (2R)-3-phosphoglycerate. The protein operates within carbohydrate degradation; glycolysis; pyruvate from D-glyceraldehyde 3-phosphate: step 3/5. Functionally, catalyzes the interconversion of 2-phosphoglycerate and 3-phosphoglycerate. This chain is 2,3-bisphosphoglycerate-dependent phosphoglycerate mutase, found in Mesorhizobium japonicum (strain LMG 29417 / CECT 9101 / MAFF 303099) (Mesorhizobium loti (strain MAFF 303099)).